The chain runs to 318 residues: Type II restriction enzyme HaeIII (318 aa).

It carries out the reaction Endonucleolytic cleavage of DNA to give specific double-stranded fragments with terminal 5'-phosphates.. Its function is as follows. A P subtype restriction enzyme that recognizes the double-stranded sequence 5'-GGCC-3' and cleaves after G-2. This is Type II restriction enzyme HaeIII (haeIIIR) from Haemophilus aegyptius.